Consider the following 81-residue polypeptide: Putative membrane protein insertion efficiency factor (81 aa).

The protein belongs to the UPF0161 family.

It is found in the cell inner membrane. Could be involved in insertion of integral membrane proteins into the membrane. The sequence is that of Putative membrane protein insertion efficiency factor from Pseudomonas syringae pv. syringae (strain B728a).